The following is a 240-amino-acid chain: tRNA (guanine-N(1)-)-methyltransferase (240 aa).

S-adenosyl-L-methionine-binding positions include Gly-110 and 130–135 (IGDYVL).

It belongs to the RNA methyltransferase TrmD family. Homodimer.

It localises to the cytoplasm. It catalyses the reaction guanosine(37) in tRNA + S-adenosyl-L-methionine = N(1)-methylguanosine(37) in tRNA + S-adenosyl-L-homocysteine + H(+). Its function is as follows. Specifically methylates guanosine-37 in various tRNAs. This is tRNA (guanine-N(1)-)-methyltransferase from Macrococcus caseolyticus (strain JCSC5402) (Macrococcoides caseolyticum).